A 175-amino-acid polypeptide reads, in one-letter code: Nucleoside-triphosphatase THEP1 (175 aa).

Residues 15–22 and 106–113 contribute to the ATP site; these read GNPGVGKT and VLAIDEIG.

It belongs to the THEP1 NTPase family.

The catalysed reaction is a ribonucleoside 5'-triphosphate + H2O = a ribonucleoside 5'-diphosphate + phosphate + H(+). Has nucleotide phosphatase activity towards ATP, GTP, CTP, TTP and UTP. May hydrolyze nucleoside diphosphates with lower efficiency. This chain is Nucleoside-triphosphatase THEP1, found in Saccharolobus solfataricus (strain ATCC 35092 / DSM 1617 / JCM 11322 / P2) (Sulfolobus solfataricus).